A 243-amino-acid polypeptide reads, in one-letter code: Methylthioribulose-1-phosphate dehydratase (243 aa).

Cysteine 90 contributes to the substrate binding site. Residues histidine 108 and histidine 110 each coordinate Zn(2+). Glutamate 131 serves as the catalytic Proton donor/acceptor. Histidine 193 contacts Zn(2+).

It belongs to the aldolase class II family. MtnB subfamily. It depends on Zn(2+) as a cofactor.

The protein resides in the cytoplasm. It catalyses the reaction 5-(methylsulfanyl)-D-ribulose 1-phosphate = 5-methylsulfanyl-2,3-dioxopentyl phosphate + H2O. The protein operates within amino-acid biosynthesis; L-methionine biosynthesis via salvage pathway; L-methionine from S-methyl-5-thio-alpha-D-ribose 1-phosphate: step 2/6. Catalyzes the dehydration of methylthioribulose-1-phosphate (MTRu-1-P) into 2,3-diketo-5-methylthiopentyl-1-phosphate (DK-MTP-1-P). This chain is Methylthioribulose-1-phosphate dehydratase, found in Zygosaccharomyces rouxii (strain ATCC 2623 / CBS 732 / NBRC 1130 / NCYC 568 / NRRL Y-229).